The primary structure comprises 438 residues: ATP-dependent RNA helicase SUB2 (438 aa).

A compositionally biased stretch (acidic residues) spans 1 to 19; that stretch reads MSHEGEEDLLEYSDNEQEI. Positions 1-44 are disordered; sequence MSHEGEEDLLEYSDNEQEIQVDNTKATEVAGNGEEAADGKDGDK. Residues 54-82 carry the Q motif motif; sequence TGFKDFLLKPELSRAIIDCGFEHPSEVQQ. In terms of domain architecture, Helicase ATP-binding spans 85–260; it reads IPQSIHGTDV…RRFLQNPLEI (176 aa). 98-105 serves as a coordination point for ATP; that stretch reads AKSGLGKT. The short motif at 207-210 is the DECD box element; sequence DECD. The 162-residue stretch at 272–433 folds into the Helicase C-terminal domain; that stretch reads GLQQYYIRLE…EFPEEGVDPS (162 aa).

It belongs to the DEAD box helicase family. DECD subfamily.

The protein localises to the nucleus. The enzyme catalyses ATP + H2O = ADP + phosphate + H(+). In terms of biological role, ATP-binding RNA helicase involved in transcription elongation and required for the export of mRNA out of the nucleus. SUB2 also plays a role in pre-mRNA splicing and spliceosome assembly. May be involved in rDNA and telomeric silencing, and maintenance of genome integrity. The polypeptide is ATP-dependent RNA helicase SUB2 (SUB2) (Eremothecium gossypii (strain ATCC 10895 / CBS 109.51 / FGSC 9923 / NRRL Y-1056) (Yeast)).